A 261-amino-acid chain; its full sequence is Anamorsin homolog (261 aa).

The tract at residues 4–134 (VQENNQVLYI…EIGSAAKLSL (131 aa)) is N-terminal SAM-like domain. Residues 134–173 (LGGGANKAKVAAVWKLDVDDDGEAEERIDEDELLDEEDKV) form a linker region. Positions 183, 192, 195, and 197 each coordinate [2Fe-2S] cluster. The interval 183–197 (CGTTGKRKACKDCSC) is fe-S binding site A. Positions 222, 225, 233, and 236 each coordinate [4Fe-4S] cluster. 2 short sequence motifs (cx2C motif) span residues 222 to 225 (CGSC) and 233 to 236 (CATC). A fe-S binding site B region spans residues 222 to 236 (CGSCYLGDAFRCATC).

The protein belongs to the anamorsin family. Monomer. Requires [2Fe-2S] cluster as cofactor. [4Fe-4S] cluster is required as a cofactor.

The protein localises to the cytoplasm. It is found in the mitochondrion intermembrane space. Functionally, component of the cytosolic iron-sulfur (Fe-S) protein assembly (CIA) machinery. Required for the maturation of extramitochondrial Fe-S proteins. Part of an electron transfer chain functioning in an early step of cytosolic Fe-S biogenesis, facilitating the de novo assembly of a [4Fe-4S] cluster on the cytosolic Fe-S scaffold complex. Electrons are transferred from NADPH via a FAD- and FMN-containing diflavin oxidoreductase. Together with the diflavin oxidoreductase, also required for the assembly of the diferric tyrosyl radical cofactor of ribonucleotide reductase (RNR), probably by providing electrons for reduction during radical cofactor maturation in the catalytic small subunit. The chain is Anamorsin homolog from Culex quinquefasciatus (Southern house mosquito).